The following is an 807-amino-acid chain: Glycerol-3-phosphate acyltransferase (807 aa).

Positions 308–313 match the HXXXXD motif motif; the sequence is CHRSHM.

Belongs to the GPAT/DAPAT family.

Its subcellular location is the cell inner membrane. It catalyses the reaction sn-glycerol 3-phosphate + an acyl-CoA = a 1-acyl-sn-glycero-3-phosphate + CoA. Its pathway is phospholipid metabolism; CDP-diacylglycerol biosynthesis; CDP-diacylglycerol from sn-glycerol 3-phosphate: step 1/3. This chain is Glycerol-3-phosphate acyltransferase, found in Shewanella frigidimarina (strain NCIMB 400).